A 186-amino-acid polypeptide reads, in one-letter code: Peptide deformylase 2 (186 aa).

Fe cation is bound by residues Cys104 and His146. The active site involves Glu147. Residue His150 participates in Fe cation binding.

This sequence belongs to the polypeptide deformylase family. Fe(2+) is required as a cofactor.

The catalysed reaction is N-terminal N-formyl-L-methionyl-[peptide] + H2O = N-terminal L-methionyl-[peptide] + formate. In terms of biological role, removes the formyl group from the N-terminal Met of newly synthesized proteins. Requires at least a dipeptide for an efficient rate of reaction. N-terminal L-methionine is a prerequisite for activity but the enzyme has broad specificity at other positions. This is Peptide deformylase 2 from Streptomyces avermitilis (strain ATCC 31267 / DSM 46492 / JCM 5070 / NBRC 14893 / NCIMB 12804 / NRRL 8165 / MA-4680).